We begin with the raw amino-acid sequence, 372 residues long: tRNA-specific 2-thiouridylase MnmA (372 aa).

ATP-binding positions include 16-23 (GMSGGVDS) and Met42. Residues 102–104 (NPD) form an interaction with target base in tRNA region. Catalysis depends on Cys107, which acts as the Nucleophile. A disulfide bridge links Cys107 with Cys205. Residue Gly132 coordinates ATP. An interaction with tRNA region spans residues 155–157 (KDQ). The Cysteine persulfide intermediate role is filled by Cys205. Residues 317–318 (RY) form an interaction with tRNA region.

Belongs to the MnmA/TRMU family.

The protein localises to the cytoplasm. It carries out the reaction S-sulfanyl-L-cysteinyl-[protein] + uridine(34) in tRNA + AH2 + ATP = 2-thiouridine(34) in tRNA + L-cysteinyl-[protein] + A + AMP + diphosphate + H(+). Its function is as follows. Catalyzes the 2-thiolation of uridine at the wobble position (U34) of tRNA, leading to the formation of s(2)U34. The sequence is that of tRNA-specific 2-thiouridylase MnmA from Shewanella sp. (strain MR-4).